A 487-amino-acid chain; its full sequence is Bifunctional protein GlmU (487 aa).

Residues 1–232 (MAVIVLAAGA…AAELAGVNDR (232 aa)) are pyrophosphorylase. Residues 6–9 (LAAG), lysine 20, glutamine 77, and 82–83 (GT) contribute to the UDP-N-acetyl-alpha-D-glucosamine site. Aspartate 107 is a binding site for Mg(2+). UDP-N-acetyl-alpha-D-glucosamine contacts are provided by glycine 142, glutamate 157, asparagine 172, and asparagine 230. Asparagine 230 is a binding site for Mg(2+). Residues 233-253 (VQLAAAGAELNRRTVTAAMRG) form a linker region. Positions 254 to 487 (GATIVDPATT…PTSTPQADQE (234 aa)) are N-acetyltransferase. Positions 335 and 353 each coordinate UDP-N-acetyl-alpha-D-glucosamine. The Proton acceptor role is filled by histidine 365. UDP-N-acetyl-alpha-D-glucosamine is bound by residues tyrosine 368 and asparagine 379. Acetyl-CoA contacts are provided by residues alanine 382, 388-389 (NY), serine 407, and alanine 425. Residues 453–487 (AKKRPGTPAAEAGEAAAKRVAEGGSPTSTPQADQE) are disordered. The segment covering 477–487 (SPTSTPQADQE) has biased composition (polar residues).

The protein in the N-terminal section; belongs to the N-acetylglucosamine-1-phosphate uridyltransferase family. In the C-terminal section; belongs to the transferase hexapeptide repeat family. Homotrimer. Mg(2+) serves as cofactor.

It is found in the cytoplasm. The enzyme catalyses alpha-D-glucosamine 1-phosphate + acetyl-CoA = N-acetyl-alpha-D-glucosamine 1-phosphate + CoA + H(+). The catalysed reaction is N-acetyl-alpha-D-glucosamine 1-phosphate + UTP + H(+) = UDP-N-acetyl-alpha-D-glucosamine + diphosphate. It participates in nucleotide-sugar biosynthesis; UDP-N-acetyl-alpha-D-glucosamine biosynthesis; N-acetyl-alpha-D-glucosamine 1-phosphate from alpha-D-glucosamine 6-phosphate (route II): step 2/2. Its pathway is nucleotide-sugar biosynthesis; UDP-N-acetyl-alpha-D-glucosamine biosynthesis; UDP-N-acetyl-alpha-D-glucosamine from N-acetyl-alpha-D-glucosamine 1-phosphate: step 1/1. The protein operates within bacterial outer membrane biogenesis; LPS lipid A biosynthesis. Functionally, catalyzes the last two sequential reactions in the de novo biosynthetic pathway for UDP-N-acetylglucosamine (UDP-GlcNAc). The C-terminal domain catalyzes the transfer of acetyl group from acetyl coenzyme A to glucosamine-1-phosphate (GlcN-1-P) to produce N-acetylglucosamine-1-phosphate (GlcNAc-1-P), which is converted into UDP-GlcNAc by the transfer of uridine 5-monophosphate (from uridine 5-triphosphate), a reaction catalyzed by the N-terminal domain. The sequence is that of Bifunctional protein GlmU from Corynebacterium jeikeium (strain K411).